A 224-amino-acid chain; its full sequence is Large ribosomal subunit protein uL4 (224 aa).

The tract at residues 54–73 (NRSEVSHSTKKPFRQKGTGN) is disordered.

This sequence belongs to the universal ribosomal protein uL4 family. In terms of assembly, part of the 50S ribosomal subunit.

Its function is as follows. One of the primary rRNA binding proteins, this protein initially binds near the 5'-end of the 23S rRNA. It is important during the early stages of 50S assembly. It makes multiple contacts with different domains of the 23S rRNA in the assembled 50S subunit and ribosome. Forms part of the polypeptide exit tunnel. The protein is Large ribosomal subunit protein uL4 of Chlamydia felis (strain Fe/C-56) (Chlamydophila felis).